The primary structure comprises 38 residues: ATP synthase subunit O, mitochondrial (38 aa).

Belongs to the ATPase delta chain family. F-type ATPases have 2 components, CF(1) - the catalytic core - and CF(0) - the membrane proton channel. CF(1) has five subunits: alpha(3), beta(3), gamma(1), delta(1), epsilon(1). CF(0) has three main subunits: a, b and c.

It localises to the mitochondrion. It is found in the mitochondrion inner membrane. In terms of biological role, mitochondrial membrane ATP synthase (F(1)F(0) ATP synthase or Complex V) produces ATP from ADP in the presence of a proton gradient across the membrane which is generated by electron transport complexes of the respiratory chain. F-type ATPases consist of two structural domains, F(1) - containing the extramembraneous catalytic core and F(0) - containing the membrane proton channel, linked together by a central stalk and a peripheral stalk. During catalysis, ATP synthesis in the catalytic domain of F(1) is coupled via a rotary mechanism of the central stalk subunits to proton translocation. Part of the complex F(0) domain and the peripheric stalk, which acts as a stator to hold the catalytic alpha(3)beta(3) subcomplex and subunit a/ATP6 static relative to the rotary elements. This chain is ATP synthase subunit O, mitochondrial, found in Pisum sativum (Garden pea).